Consider the following 61-residue polypeptide: Small ribosomal subunit protein uS14B (61 aa).

Residues Cys-24, Cys-27, Cys-40, and Cys-43 each contribute to the Zn(2+) site.

The protein belongs to the universal ribosomal protein uS14 family. Zinc-binding uS14 subfamily. As to quaternary structure, part of the 30S ribosomal subunit. Contacts proteins S3 and S10. Requires Zn(2+) as cofactor.

Its function is as follows. Binds 16S rRNA, required for the assembly of 30S particles and may also be responsible for determining the conformation of the 16S rRNA at the A site. The protein is Small ribosomal subunit protein uS14B of Streptococcus agalactiae serotype Ia (strain ATCC 27591 / A909 / CDC SS700).